We begin with the raw amino-acid sequence, 382 residues long: UDP-N-acetylglucosamine--N-acetylmuramyl-(pentapeptide) pyrophosphoryl-undecaprenol N-acetylglucosamine transferase (382 aa).

UDP-N-acetyl-alpha-D-glucosamine contacts are provided by residues 11–13 (TGG), asparagine 117, arginine 160, serine 209, and glutamine 311.

This sequence belongs to the glycosyltransferase 28 family. MurG subfamily.

The protein resides in the cell inner membrane. It carries out the reaction di-trans,octa-cis-undecaprenyl diphospho-N-acetyl-alpha-D-muramoyl-L-alanyl-D-glutamyl-meso-2,6-diaminopimeloyl-D-alanyl-D-alanine + UDP-N-acetyl-alpha-D-glucosamine = di-trans,octa-cis-undecaprenyl diphospho-[N-acetyl-alpha-D-glucosaminyl-(1-&gt;4)]-N-acetyl-alpha-D-muramoyl-L-alanyl-D-glutamyl-meso-2,6-diaminopimeloyl-D-alanyl-D-alanine + UDP + H(+). It functions in the pathway cell wall biogenesis; peptidoglycan biosynthesis. Cell wall formation. Catalyzes the transfer of a GlcNAc subunit on undecaprenyl-pyrophosphoryl-MurNAc-pentapeptide (lipid intermediate I) to form undecaprenyl-pyrophosphoryl-MurNAc-(pentapeptide)GlcNAc (lipid intermediate II). This chain is UDP-N-acetylglucosamine--N-acetylmuramyl-(pentapeptide) pyrophosphoryl-undecaprenol N-acetylglucosamine transferase, found in Rickettsia akari (strain Hartford).